A 128-amino-acid polypeptide reads, in one-letter code: NHP2-like protein 1 (128 aa).

The segment at 36–48 is interaction with U4 snRNA and U4atac snRNA; it reads RKGANEATKTLNR. The segment at 96–128 is important for U4 snRNA-binding; it reads SRPVIACAVTIKEGSQLKPQIQSLQQSIERLLV.

The protein belongs to the eukaryotic ribosomal protein eL8 family. Identified in the spliceosome B complex. Component of the U4/U6-U5 tri-snRNP complex. Part of the small subunit (SSU) processome, composed of more than 70 proteins and the RNA chaperone small nucleolar RNA (snoRNA) U3.

The protein localises to the nucleus. It is found in the nucleolus. In terms of biological role, part of the small subunit (SSU) processome, first precursor of the small eukaryotic ribosomal subunit. During the assembly of the SSU processome in the nucleolus, many ribosome biogenesis factors, an RNA chaperone and ribosomal proteins associate with the nascent pre-rRNA and work in concert to generate RNA folding, modifications, rearrangements and cleavage as well as targeted degradation of pre-ribosomal RNA by the RNA exosome. Involved in pre-mRNA splicing as component of the spliceosome. Binds to the 5'-stem-loop of U4 snRNA and thereby contributes to spliceosome assembly. The protein undergoes a conformational change upon RNA-binding. Core component of box C/D small nucleolar ribonucleoprotein (snoRNP) complexes that function in methylation of multiple sites on ribosomal RNAs (rRNAs) and messenger RNAs (mRNAs). This is NHP2-like protein 1 from Xenopus tropicalis (Western clawed frog).